The chain runs to 271 residues: Short-chain dehydrogenase ptmH (271 aa).

Positions 8, 34, 40, 56, 84, 148, 152, 181, and 183 each coordinate NADP(+). The Proton acceptor role is filled by tyrosine 148. Lysine 152 serves as the catalytic Lowers pKa of active site Tyr.

The protein belongs to the short-chain dehydrogenases/reductases (SDR) family.

The protein operates within secondary metabolite biosynthesis. Functionally, short-chain dehydrogenase; part of the gene cluster that mediates the biosynthesis of the indole diterpenes penitrems. The geranylgeranyl diphosphate (GGPP) synthase ptmG catalyzes the first step in penitrem biosynthesis via conversion of farnesyl pyrophosphate and isopentyl pyrophosphate into geranylgeranyl pyrophosphate (GGPP). Condensation of indole-3-glycerol phosphate with GGPP by the prenyl transferase ptmC then forms 3-geranylgeranylindole (3-GGI). Epoxidation by the FAD-dependent monooxygenase ptmM leads to a epoxidized-GGI that is substrate of the terpene cyclase ptmB for cyclization to yield paspaline. Paspaline is subsequently converted to 13-desoxypaxilline by the cytochrome P450 monooxygenase ptmP, the latter being then converted to paxilline by the cytochrome P450 monooxygenase ptmQ. Paxilline is converted to beta-paxitriol via C-10 ketoreduction by the short-chain dehydrogenase ptmH which can be monoprenylated at the C-20 by the indole diterpene prenyltransferase ptmD. A two-step elimination (acetylation and elimination) process performed by the O-acetyltransferase ptmV and ptmI leads to the production of the prenylated form of penijanthine. The FAD-linked oxidoreductase ptmO then converts the prenylated form of penijanthine into PC-M5 which is in turn transformed into PC-M4 by the aromatic dimethylallyltransferase ptmE. Five sequential oxidative transformations performed by the cytochrome P450 monooxygenases ptmK, ptmU, ptmL, ptmN and ptmJ yield the various penitrem compounds. PtmK, ptmU and ptmM are involved in the formation of the key bicyclic ring of penitrem C via the formation of the intermediates secopenitrem D and penitrem D. PtmL catalyzes the epoxidation of penitrem D and C to yield penitrem B and F, respectively. PtmJ catalyzes the last benzylic hydroxylation to convert penitrem B to prenitrem E and penitrem F to penitrem A. The polypeptide is Short-chain dehydrogenase ptmH (Penicillium ochrochloron).